Here is a 601-residue protein sequence, read N- to C-terminus: Molybdenum cofactor synthesis protein cinnamon (601 aa).

The segment at 3–153 (SITFGVLTIS…TISALLPHAV (151 aa)) is MPT adenylyltransferase. The interval 173 to 195 (SAQKSHICPHKTGTGTDSDRNSP) is disordered. Residues 184 to 596 (TGTGTDSDRN…FPASVLRFDF (413 aa)) form an MPT Mo-transferase region. At S376 the chain carries Phosphoserine.

This sequence in the N-terminal section; belongs to the MoaB/Mog family. In the C-terminal section; belongs to the MoeA family. Requires Mg(2+) as cofactor.

It catalyses the reaction molybdopterin + ATP + H(+) = adenylyl-molybdopterin + diphosphate. The enzyme catalyses adenylyl-molybdopterin + molybdate = Mo-molybdopterin + AMP + H(+). It functions in the pathway cofactor biosynthesis; molybdopterin biosynthesis. Functionally, catalyzes two steps in the biosynthesis of the molybdenum cofactor. In the first step, molybdopterin is adenylated. Subsequently, molybdate is inserted into adenylated molybdopterin and AMP is released. The chain is Molybdenum cofactor synthesis protein cinnamon (cin) from Drosophila melanogaster (Fruit fly).